A 255-amino-acid chain; its full sequence is Imidazole glycerol phosphate synthase subunit HisF (255 aa).

Active-site residues include Asp-12 and Asp-131.

Belongs to the HisA/HisF family. As to quaternary structure, heterodimer of HisH and HisF.

Its subcellular location is the cytoplasm. It catalyses the reaction 5-[(5-phospho-1-deoxy-D-ribulos-1-ylimino)methylamino]-1-(5-phospho-beta-D-ribosyl)imidazole-4-carboxamide + L-glutamine = D-erythro-1-(imidazol-4-yl)glycerol 3-phosphate + 5-amino-1-(5-phospho-beta-D-ribosyl)imidazole-4-carboxamide + L-glutamate + H(+). It functions in the pathway amino-acid biosynthesis; L-histidine biosynthesis; L-histidine from 5-phospho-alpha-D-ribose 1-diphosphate: step 5/9. Functionally, IGPS catalyzes the conversion of PRFAR and glutamine to IGP, AICAR and glutamate. The HisF subunit catalyzes the cyclization activity that produces IGP and AICAR from PRFAR using the ammonia provided by the HisH subunit. This is Imidazole glycerol phosphate synthase subunit HisF from Vesicomyosocius okutanii subsp. Calyptogena okutanii (strain HA).